We begin with the raw amino-acid sequence, 94 residues long: Evasin P1104 (94 aa).

An N-terminal signal peptide occupies residues 1-28 (MASNLFTIFQLAGFVAIVFIVNLHSVSA). Cystine bridges form between Cys-48-Cys-66, Cys-52-Cys-68, and Cys-62-Cys-79. Residue Asn-51 is glycosylated (N-linked (GlcNAc...) asparagine).

The protein resides in the secreted. In terms of biological role, salivary chemokine-binding protein which binds to host chemokines CXCL1, CXCL2, CXCL3, CXCL5, CXCL6, CXCL12 and CXCL13. This is Evasin P1104 from Ixodes ricinus (Common tick).